The chain runs to 101 residues: Small ribosomal subunit protein uS14 (101 aa).

Belongs to the universal ribosomal protein uS14 family. Part of the 30S ribosomal subunit. Contacts proteins S3 and S10.

Its function is as follows. Binds 16S rRNA, required for the assembly of 30S particles and may also be responsible for determining the conformation of the 16S rRNA at the A site. The chain is Small ribosomal subunit protein uS14 from Burkholderia vietnamiensis (strain G4 / LMG 22486) (Burkholderia cepacia (strain R1808)).